Consider the following 688-residue polypeptide: Elongation factor G (688 aa).

The 275-residue stretch at 8 to 282 (DKFRNFGIMA…GVVDYLPSPL (275 aa)) folds into the tr-type G domain. Residues 17 to 24 (AHIDAGKT), 81 to 85 (DTPGH), and 135 to 138 (NKMD) each bind GTP.

It belongs to the TRAFAC class translation factor GTPase superfamily. Classic translation factor GTPase family. EF-G/EF-2 subfamily.

Its subcellular location is the cytoplasm. In terms of biological role, catalyzes the GTP-dependent ribosomal translocation step during translation elongation. During this step, the ribosome changes from the pre-translocational (PRE) to the post-translocational (POST) state as the newly formed A-site-bound peptidyl-tRNA and P-site-bound deacylated tRNA move to the P and E sites, respectively. Catalyzes the coordinated movement of the two tRNA molecules, the mRNA and conformational changes in the ribosome. This Clostridium beijerinckii (strain ATCC 51743 / NCIMB 8052) (Clostridium acetobutylicum) protein is Elongation factor G.